The chain runs to 402 residues: MTYNQPNNKGFYGQFGGQFVPETLMTAVKQLEEAYVDSKKDPLFQAELKELLKDYVGRENPLYYAKRLTEYAGGAKIYLKREDLNHTGAHKINNALGQVLLAKKMGKNKVIAETGAGQHGVASATAAALFGMECTIYMGEEDVKRQSLNVFRMELLGAKVHSVTDGSRVLKDAVNAALRAWVAQVEDTHYVMGSVLGPHPFPQIVRDYQAVIGQEARAQFLEKENKLPDALVACVGGGSNSMGLFYPFVNDESVAMYGVEAAGLGIDTPHHAATITKGRPGVLHGTLMDVLQDENGQMLEAFSISAGLDYPGIGPEHSYFNAVGRAKYVDITDEEALEGFKILSRTEGIIPALESSHAIAYAVKLAKELGADKSMIVCLSGRGDKDVVQVKERLEAEKEVKK.

Lysine 91 bears the N6-(pyridoxal phosphate)lysine mark.

It belongs to the TrpB family. Tetramer of two alpha and two beta chains. The cofactor is pyridoxal 5'-phosphate.

It catalyses the reaction (1S,2R)-1-C-(indol-3-yl)glycerol 3-phosphate + L-serine = D-glyceraldehyde 3-phosphate + L-tryptophan + H2O. It functions in the pathway amino-acid biosynthesis; L-tryptophan biosynthesis; L-tryptophan from chorismate: step 5/5. The beta subunit is responsible for the synthesis of L-tryptophan from indole and L-serine. The chain is Tryptophan synthase beta chain (trpB) from Lactococcus lactis subsp. lactis (strain IL1403) (Streptococcus lactis).